Reading from the N-terminus, the 255-residue chain is Urease accessory protein UreD 1 (255 aa).

The protein belongs to the UreD family. As to quaternary structure, ureD, UreF and UreG form a complex that acts as a GTP-hydrolysis-dependent molecular chaperone, activating the urease apoprotein by helping to assemble the nickel containing metallocenter of UreC. The UreE protein probably delivers the nickel.

It is found in the cytoplasm. Functionally, required for maturation of urease via the functional incorporation of the urease nickel metallocenter. The sequence is that of Urease accessory protein UreD 1 from Saccharopolyspora erythraea (strain ATCC 11635 / DSM 40517 / JCM 4748 / NBRC 13426 / NCIMB 8594 / NRRL 2338).